Here is a 248-residue protein sequence, read N- to C-terminus: Phosphomannomutase (248 aa).

Asp-14 (nucleophile) is an active-site residue. Asp-14 and Asp-16 together coordinate Mg(2+). Residue Asp-16 is the Proton donor/acceptor of the active site. Arg-23, Arg-125, Arg-136, Arg-143, Ser-181, and Asp-183 together coordinate alpha-D-mannose 1-phosphate. The Mg(2+) site is built by Asp-209, Phe-221, and Thr-226.

The protein belongs to the eukaryotic PMM family. Homodimer. Mg(2+) is required as a cofactor.

It localises to the cytoplasm. It catalyses the reaction alpha-D-mannose 1-phosphate = D-mannose 6-phosphate. The protein operates within nucleotide-sugar biosynthesis; GDP-alpha-D-mannose biosynthesis; alpha-D-mannose 1-phosphate from D-fructose 6-phosphate: step 2/2. Catalyzes the interconversion of mannose-6-phosphate to mannose-1-phosphate, the precursor for the synthesis of GDP-mannose. GDP-mannose is an essential sugar nucleotide for the synthesis of D-mannose-containing cell wall polysaccharides (galactomannans and glucomannans), glycolipids, glycoproteins and the antioxidant L-ascorbate. The chain is Phosphomannomutase from Oryza sativa subsp. indica (Rice).